A 141-amino-acid chain; its full sequence is MVDMDRISISLPTNLLAEFDEIIEERGYASRSEAIRDSIRDYLIKHKWIHSLEGDRAGTISIIYDHHSTDVMEKLTNIQHDYEKLIVATIHMHLDHDHCMEVVLVKGDASDIKELTDKLTSQKGVKQVKLTVMVPGGNIPQ.

His80, His91, His93, and Cys99 together coordinate Ni(2+).

Belongs to the transcriptional regulatory CopG/NikR family. Ni(2+) serves as cofactor.

Its function is as follows. Transcriptional regulator. This is Putative nickel-responsive regulator from Methanococcus maripaludis (strain C6 / ATCC BAA-1332).